The primary structure comprises 420 residues: ATP phosphoribosyltransferase regulatory subunit (420 aa).

Belongs to the class-II aminoacyl-tRNA synthetase family. HisZ subfamily. Heteromultimer composed of HisG and HisZ subunits.

The protein localises to the cytoplasm. It participates in amino-acid biosynthesis; L-histidine biosynthesis; L-histidine from 5-phospho-alpha-D-ribose 1-diphosphate: step 1/9. Required for the first step of histidine biosynthesis. May allow the feedback regulation of ATP phosphoribosyltransferase activity by histidine. In Bacillus cereus (strain B4264), this protein is ATP phosphoribosyltransferase regulatory subunit.